A 161-amino-acid polypeptide reads, in one-letter code: Allophycocyanin beta chain (161 aa).

Asparagine 71 bears the N4-methylasparagine mark. A (2R,3E)-phycocyanobilin-binding site is contributed by cysteine 81.

Belongs to the phycobiliprotein family. As to quaternary structure, heterodimer of an alpha and a beta chain. Contains one covalently linked phycocyanobilin chromophore.

The protein localises to the cellular thylakoid membrane. Light-harvesting photosynthetic bile pigment-protein from the phycobiliprotein complex. Allophycocyanin has a maximum absorption at approximately 650 nanometers. This Anabaena variabilis protein is Allophycocyanin beta chain (apcB).